The chain runs to 888 residues: Patched domain-containing protein 1 (888 aa).

A helical membrane pass occupies residues 20–40 (FIASHPVFFASAPVLISILLG). Residues Asn-77, Asn-133, and Asn-167 are each glycosylated (N-linked (GlcNAc...) asparagine). In terms of domain architecture, SSD spans 268-427 (SERYLVTSLI…LSFYGSSLVF (160 aa)). 2 consecutive transmembrane segments (helical) span residues 273–293 (VTSL…QDCV) and 298–318 (WLGL…AGII). Residues Asn-319 and Asn-326 are each glycosylated (N-linked (GlcNAc...) asparagine). The next 4 helical transmembrane spans lie at 328–348 (TFLG…FEML), 373–393 (LSFS…ASPF), 407–427 (CIAI…SLVF), and 502–522 (PFVV…YLQV). N-linked (GlcNAc...) asparagine glycosylation is found at Asn-568, Asn-599, and Asn-608. The next 2 membrane-spanning stretches (helical) occupy residues 707-727 (ALFL…NVWI) and 738-758 (VIGF…LCLI). Asn-762 carries N-linked (GlcNAc...) asparagine glycosylation. Residues 795 to 815 (GVAILQSYLCYIVGLIPLAAV) form a helical membrane-spanning segment. Asn-818 is a glycosylation site (N-linked (GlcNAc...) asparagine). A helical membrane pass occupies residues 826–846 (CLFLIAFVTFFHCFAILPVIL).

It belongs to the patched family. As to expression, widely expressed, including in various regions of the brain with highest expression in the gray and white cerebellum, followed by the cerebellar vermis and the pituitary gland.

It is found in the cell membrane. Its subcellular location is the cell projection. The protein localises to the dendritic spine. In terms of biological role, required for the development and function of the thalamic reticular nucleus (TRN), a part of the thalamus that is critical for thalamocortical transmission, generation of sleep rhythms, sensorimotor processing and attention. Can bind cholesterol in vitro. In Homo sapiens (Human), this protein is Patched domain-containing protein 1.